Consider the following 68-residue polypeptide: Phycobilisome 7.8 kDa linker polypeptide, allophycocyanin-associated, core (68 aa).

The CpcD-like domain maps to 2-57 (SRLFKITALVPSLSRTRTQRELQNTYFTKLVPYENWFREQQRIQKAGGKIIKVELA).

This sequence belongs to the phycobilisome linker protein family.

Its subcellular location is the cellular thylakoid membrane. Functionally, rod linker protein, associated with allophycocyanin. Linker polypeptides determine the state of aggregation and the location of the disk-shaped phycobiliprotein units within the phycobilisome and modulate their spectroscopic properties in order to mediate a directed and optimal energy transfer. This is Phycobilisome 7.8 kDa linker polypeptide, allophycocyanin-associated, core (apcC) from Nostoc sp. (strain PCC 7120 / SAG 25.82 / UTEX 2576).